Reading from the N-terminus, the 258-residue chain is Pyridoxine 5'-phosphate synthase (258 aa).

Asn-6 is a binding site for 3-amino-2-oxopropyl phosphate. 8 to 9 (DH) is a binding site for 1-deoxy-D-xylulose 5-phosphate. Arg-17 is a binding site for 3-amino-2-oxopropyl phosphate. His-42 functions as the Proton acceptor in the catalytic mechanism. 1-deoxy-D-xylulose 5-phosphate-binding residues include Arg-44 and His-49. The active-site Proton acceptor is the Glu-69. Thr-99 lines the 1-deoxy-D-xylulose 5-phosphate pocket. Residue His-213 is the Proton donor of the active site. 3-amino-2-oxopropyl phosphate-binding positions include Gly-214 and 235-236 (GQ).

It belongs to the PNP synthase family. As to quaternary structure, homooctamer; tetramer of dimers.

It is found in the cytoplasm. It catalyses the reaction 3-amino-2-oxopropyl phosphate + 1-deoxy-D-xylulose 5-phosphate = pyridoxine 5'-phosphate + phosphate + 2 H2O + H(+). It participates in cofactor biosynthesis; pyridoxine 5'-phosphate biosynthesis; pyridoxine 5'-phosphate from D-erythrose 4-phosphate: step 5/5. Catalyzes the complicated ring closure reaction between the two acyclic compounds 1-deoxy-D-xylulose-5-phosphate (DXP) and 3-amino-2-oxopropyl phosphate (1-amino-acetone-3-phosphate or AAP) to form pyridoxine 5'-phosphate (PNP) and inorganic phosphate. The protein is Pyridoxine 5'-phosphate synthase of Sulfurovum sp. (strain NBC37-1).